A 749-amino-acid chain; its full sequence is Transcription factor RFX3 (749 aa).

A DNA-binding region (RFX-type winged-helix) is located at residues histidine 183–proline 258.

Belongs to the RFX family.

Its subcellular location is the nucleus. Functionally, transcription factor required for ciliogenesis and islet cell differentiation during endocrine pancreas development. The chain is Transcription factor RFX3 (rfx3) from Xenopus tropicalis (Western clawed frog).